The sequence spans 148 residues: MALYEHVLLARQDISQQQVDALVEQFKGVLEANGGKFGKVENWGLRPLTYRIKKNRKAYYTLVNIDAPAAAVAEMERQMRINEDVLRFLTVRVEEHEEGQSAMLTRRDDRRERDGDDRPRRREGGFDRGDRGDRGPRRPRDTEAGEGA.

Residues 96–148 are disordered; it reads HEEGQSAMLTRRDDRRERDGDDRPRRREGGFDRGDRGDRGPRRPRDTEAGEGA.

The protein belongs to the bacterial ribosomal protein bS6 family.

Its function is as follows. Binds together with bS18 to 16S ribosomal RNA. The protein is Small ribosomal subunit protein bS6 of Brucella canis (strain ATCC 23365 / NCTC 10854 / RM-666).